The following is a 244-amino-acid chain: Phosphoadenosine 5'-phosphosulfate reductase (244 aa).

The active-site Nucleophile; cysteine thiosulfonate intermediate is Cys239.

The protein belongs to the PAPS reductase family. CysH subfamily.

It is found in the cytoplasm. The enzyme catalyses [thioredoxin]-disulfide + sulfite + adenosine 3',5'-bisphosphate + 2 H(+) = [thioredoxin]-dithiol + 3'-phosphoadenylyl sulfate. The protein operates within sulfur metabolism; hydrogen sulfide biosynthesis; sulfite from sulfate: step 3/3. Catalyzes the formation of sulfite from phosphoadenosine 5'-phosphosulfate (PAPS) using thioredoxin as an electron donor. In Zymomonas mobilis subsp. mobilis (strain ATCC 31821 / ZM4 / CP4), this protein is Phosphoadenosine 5'-phosphosulfate reductase.